The following is a 450-amino-acid chain: Tubulin beta-3 chain (450 aa).

Glutamine 11, glutamate 69, serine 138, glycine 142, threonine 143, glycine 144, asparagine 204, and asparagine 226 together coordinate GTP. Residue glutamate 69 participates in Mg(2+) binding. The interval 420-450 (SEYQQYQDATADEEGDYEDEEEGEYQQEEEY) is disordered. A compositionally biased stretch (acidic residues) spans 429 to 450 (TADEEGDYEDEEEGEYQQEEEY).

The protein belongs to the tubulin family. In terms of assembly, dimer of alpha and beta chains. A typical microtubule is a hollow water-filled tube with an outer diameter of 25 nm and an inner diameter of 15 nM. Alpha-beta heterodimers associate head-to-tail to form protofilaments running lengthwise along the microtubule wall with the beta-tubulin subunit facing the microtubule plus end conferring a structural polarity. Microtubules usually have 13 protofilaments but different protofilament numbers can be found in some organisms and specialized cells. Mg(2+) serves as cofactor.

It is found in the cytoplasm. The protein resides in the cytoskeleton. In terms of biological role, tubulin is the major constituent of microtubules, a cylinder consisting of laterally associated linear protofilaments composed of alpha- and beta-tubulin heterodimers. Microtubules grow by the addition of GTP-tubulin dimers to the microtubule end, where a stabilizing cap forms. Below the cap, tubulin dimers are in GDP-bound state, owing to GTPase activity of alpha-tubulin. This chain is Tubulin beta-3 chain (TUBB3), found in Arabidopsis thaliana (Mouse-ear cress).